We begin with the raw amino-acid sequence, 156 residues long: Small ribosomal subunit protein uS7 (156 aa).

The protein belongs to the universal ribosomal protein uS7 family. As to quaternary structure, part of the 30S ribosomal subunit. Contacts proteins S9 and S11.

Its function is as follows. One of the primary rRNA binding proteins, it binds directly to 16S rRNA where it nucleates assembly of the head domain of the 30S subunit. Is located at the subunit interface close to the decoding center, probably blocks exit of the E-site tRNA. The protein is Small ribosomal subunit protein uS7 of Mycobacterium leprae (strain Br4923).